A 394-amino-acid polypeptide reads, in one-letter code: Alpha-2B adrenergic receptor (394 aa).

A helical transmembrane segment spans residues 1 to 25; sequence AIAAVITFLILFTIFGNALVILAVL. Residues 26-36 are Cytoplasmic-facing; that stretch reads TSRSLRAPQNL. A helical transmembrane segment spans residues 37 to 62; it reads FLVSLAAADILVATLIIPFSLANELL. At 63 to 72 the chain is on the extracellular side; that stretch reads GYWYFRRTWC. The cysteines at positions 72 and 151 are disulfide-linked. The helical transmembrane segment at 73–95 threads the bilayer; the sequence is EVYLALDVLFCTSSIVHLCAISL. The Cytoplasmic segment spans residues 96-117; it reads DRYWAVSRALEYNCKRTPRRIK. The helical transmembrane segment at 118–140 threads the bilayer; the sequence is CIILTVWLIAAAISLPPLIYKGD. At 141–156 the chain is on the extracellular side; the sequence is QGPQPHGAPQCKLNQE. The helical transmembrane segment at 157-180 threads the bilayer; sequence AWYILSSSLGSFFVPCLIMILVYL. Topologically, residues 181–358 are cytoplasmic; the sequence is RIYLIAKRSH…LSREKRFTFV (178 aa). The disordered stretch occupies residues 191-318; it reads RRGPRAKGGP…GSPPLQQPQG (128 aa). Acidic residues predominate over residues 281–298; it reads LEEEAEEEEEEEEEEDEP. Residues 299–312 show a composition bias toward low complexity; the sequence is QAVPVSPASVGSPP. A helical membrane pass occupies residues 359 to 382; the sequence is LAVVIGVFVLCWFPFFFSYSLSAI. The Extracellular segment spans residues 383-391; the sequence is CPQQCRVPH. The chain crosses the membrane as a helical span at residues 392-394; that stretch reads GLF.

This sequence belongs to the G-protein coupled receptor 1 family. Adrenergic receptor subfamily. ADRA2B sub-subfamily. As to quaternary structure, interacts with RAB26. Interacts with PPP1R9B. Interacts with GGA1, GGA2 and GGA3.

It is found in the cell membrane. Functionally, alpha-2 adrenergic receptors mediate the catecholamine-induced inhibition of adenylate cyclase through the action of G proteins. This chain is Alpha-2B adrenergic receptor (ADRA2B), found in Oryctolagus cuniculus (Rabbit).